Reading from the N-terminus, the 361-residue chain is MKTTPFTEKHIALGAKMHEFAGYNMPIEYSGIIDEHLTVCNGVGVFDVSHMGEFWVKGPHALDFLQKVTSNNVAALVPGKIQYTCFPNEDGGIVDDLLVYQYEPEKYLLVVNASNIEKDWNWCISHNTEGAELENSSDNMAQLAVQGPKAIQALQKLTDINLADIPYYTFKVGEFAGEKNVIISNTGYTGAGGFELYFYPDAAMKIWDAVFEAGAEFGIKPIGLGARDTLRLEMGFCLYGNDLDDTTSPIEAGLGWITKFVDGKNFTNRSMLEKQKAEGTVRKLVGFEMIDRGIPRHGYELTTAEGDKIGVVTSGTMSPIRKIGIGMGYVKPEYSKIGTEICIDMRGRKLKAVVVKPPFRK.

The protein belongs to the GcvT family. In terms of assembly, the glycine cleavage system is composed of four proteins: P, T, L and H.

The enzyme catalyses N(6)-[(R)-S(8)-aminomethyldihydrolipoyl]-L-lysyl-[protein] + (6S)-5,6,7,8-tetrahydrofolate = N(6)-[(R)-dihydrolipoyl]-L-lysyl-[protein] + (6R)-5,10-methylene-5,6,7,8-tetrahydrofolate + NH4(+). In terms of biological role, the glycine cleavage system catalyzes the degradation of glycine. This Bacteroides fragilis (strain ATCC 25285 / DSM 2151 / CCUG 4856 / JCM 11019 / LMG 10263 / NCTC 9343 / Onslow / VPI 2553 / EN-2) protein is Aminomethyltransferase.